The following is a 422-amino-acid chain: Glucose-1-phosphate adenylyltransferase (422 aa).

Alpha-D-glucose 1-phosphate is bound by residues Tyr-109, Gly-175, 190–191 (EK), and Ser-208.

This sequence belongs to the bacterial/plant glucose-1-phosphate adenylyltransferase family. In terms of assembly, homotetramer.

The enzyme catalyses alpha-D-glucose 1-phosphate + ATP + H(+) = ADP-alpha-D-glucose + diphosphate. Its pathway is glycan biosynthesis; glycogen biosynthesis. Involved in the biosynthesis of ADP-glucose, a building block required for the elongation reactions to produce glycogen. Catalyzes the reaction between ATP and alpha-D-glucose 1-phosphate (G1P) to produce pyrophosphate and ADP-Glc. The chain is Glucose-1-phosphate adenylyltransferase from Shewanella amazonensis (strain ATCC BAA-1098 / SB2B).